The sequence spans 123 residues: Omega-oxotoxin-Ot1a (123 aa).

Residues 1–16 (MKIVLVFVCTLYLAQA) form the signal peptide. A propeptide spanning residues 17-54 (TYLSEQDVNEVSEFLEALDQANEAASEMVEAAETEEAR) is cleaved from the precursor. Positions 55–122 (DWECLPLHSS…GKINTCDKYK (68 aa)) constitute an Oxytoxin-type inhibitor cystine knot (ICK) domain. 5 disulfides stabilise this stretch: C58–C72, C65–C77, C69–C118, C71–C106, and C79–C104.

The protein belongs to the spiderine family. Spiderine subfamily. In terms of processing, mass spectrometry data suggest a carboxylated free C-terminal residue. Expressed by the venom gland.

It is found in the secreted. Its function is as follows. Weak blocker of vertebrate P/Q-, N- and L-type voltage-gated calcium channels (Cav1 and Cav2). Is both paralytic and lethal when injected into lepidopteran larvae. Is not toxic to mice. The sequence is that of Omega-oxotoxin-Ot1a from Oxyopes takobius (Lynx spider).